Here is a 113-residue protein sequence, read N- to C-terminus: Protein S100-A9 (113 aa).

Ala-2 carries the post-translational modification N-acetylalanine. 2 consecutive EF-hand domains span residues 13-48 and 55-90; these read ISTIINVFHQYSRKYGHPDTLNKAEFKEMVNKDLPN and RNENLLRDIMEDLDTNQDNQLSFEECMMLMGKLIFA. His-21 is a binding site for Zn(2+). 2 residues coordinate Ca(2+): Ser-24 and His-29. Asp-31 contacts Zn(2+). Residues Thr-32, Glu-37, Asp-68, Asn-70, Asp-72, Gln-74, and Glu-79 each coordinate Ca(2+). The Zn(2+) site is built by His-92 and His-96. Residue His-107 is modified to Pros-methylhistidine.

Homodimer. Preferentially exists as a heterodimer or heterotetramer with S100A8 known as calprotectin (S100A8/A9). S100A9 interacts with ATP2A2. S100A9 interacts with AGER, and with the heterodimeric complex formed by TLR4 and LY96 in the presence of calcium and/or zinc ions. S100A9 binds quinoline-3-carboxamides in the presence of calcium and/or zinc ions. S100A9 interacts with amyloid-beta protein 40. Calprotectin (S100A8/9) interacts with CEACAM3 and tubulin filaments in a calcium-dependent manner. Heterotetrameric calprotectin (S100A8/A9) interacts with ANXA6 and associates with tubulin filaments in activated monocytes. Calprotectin (S100A8/9) interacts with NCF2/P67PHOX, RAC1, RAC2, CYBA and CYBB. Calprotectin (S100A8/9) interacts with NOS2 to form the iNOS-S100A8/A9 transnitrosylase complex; induced by LDL(ox). Calprotectin (S100A8/9) interacts with CD69. Phosphorylated. Phosphorylation inhibits activation of tubulin polymerization. In terms of processing, methylation at His-107 by METTL9 reduces zinc-binding without affecting heterodimerization with S100A8. Highly expressed at sites of inflammation.

It localises to the secreted. The protein resides in the cytoplasm. It is found in the cytoskeleton. Its subcellular location is the cell membrane. In terms of biological role, S100A9 is a calcium- and zinc-binding protein which plays a prominent role in the regulation of inflammatory processes and immune response. It can induce neutrophil chemotaxis, adhesion, can increase the bactericidal activity of neutrophils by promoting phagocytosis via activation of SYK, PI3K/AKT, and ERK1/2 and can induce degranulation of neutrophils by a MAPK-dependent mechanism. Predominantly found as calprotectin (S100A8/A9) which has a wide plethora of intra- and extracellular functions. The intracellular functions include: facilitating leukocyte arachidonic acid trafficking and metabolism, modulation of the tubulin-dependent cytoskeleton during migration of phagocytes and activation of the neutrophilic NADPH-oxidase. Also participates in regulatory T-cell differentiation together with CD69. Activates NADPH-oxidase by facilitating the enzyme complex assembly at the cell membrane, transferring arachidonic acid, an essential cofactor, to the enzyme complex and S100A8 contributes to the enzyme assembly by directly binding to NCF2/P67PHOX. The extracellular functions involve pro-inflammatory, antimicrobial, oxidant-scavenging and apoptosis-inducing activities. Its pro-inflammatory activity includes recruitment of leukocytes, promotion of cytokine and chemokine production, and regulation of leukocyte adhesion and migration. Acts as an alarmin or a danger associated molecular pattern (DAMP) molecule and stimulates innate immune cells via binding to pattern recognition receptors such as Toll-like receptor 4 (TLR4) and receptor for advanced glycation endproducts (AGER). Binding to TLR4 and AGER activates the MAP-kinase and NF-kappa-B signaling pathways resulting in the amplification of the pro-inflammatory cascade. Has antimicrobial activity towards bacteria and fungi and exerts its antimicrobial activity probably via chelation of Zn(2+) which is essential for microbial growth. Can induce cell death via autophagy and apoptosis and this occurs through the cross-talk of mitochondria and lysosomes via reactive oxygen species (ROS) and the process involves BNIP3. Can regulate neutrophil number and apoptosis by an anti-apoptotic effect; regulates cell survival via ITGAM/ITGB and TLR4 and a signaling mechanism involving MEK-ERK. Its role as an oxidant scavenger has a protective role in preventing exaggerated tissue damage by scavenging oxidants. The iNOS-S100A8/A9 transnitrosylase complex is proposed to direct selective inflammatory stimulus-dependent S-nitrosylation of multiple targets such as GAPDH, NXA5, EZR, MSN and VIM by recognizing a [IL]-x-C-x-x-[DE] motif. This chain is Protein S100-A9 (S100a9), found in Rattus norvegicus (Rat).